The sequence spans 268 residues: Interleukin-1 beta (268 aa).

Residues 1–115 (MAAVPDTSDM…DNWDEGYVCD (115 aa)) constitute a propeptide that is removed on maturation.

This sequence belongs to the IL-1 family. In terms of assembly, monomer. In its precursor form, weakly interacts with full-length MEFV; the mature cytokine does not interact at all. Interacts with integrins ITGAV:ITGBV and ITGA5:ITGB1; integrin-binding is required for IL1B signaling. Interacts with cargo receptor TMED10; the interaction is direct and is required for the secretion of IL1B mature form. Interacts with HSP90AB1; the interaction facilitates cargo translocation into the ERGIC. Interacts with HSP90B1; the interaction facilitates cargo translocation into the ERGIC.

It localises to the cytoplasm. Its subcellular location is the cytosol. The protein resides in the secreted. It is found in the lysosome. The protein localises to the extracellular exosome. Potent pro-inflammatory cytokine. Initially discovered as the major endogenous pyrogen, induces prostaglandin synthesis, neutrophil influx and activation, T-cell activation and cytokine production, B-cell activation and antibody production, and fibroblast proliferation and collagen production. Promotes Th17 differentiation of T-cells. Synergizes with IL12/interleukin-12 to induce IFNG synthesis from T-helper 1 (Th1) cells. Plays a role in angiogenesis by inducing VEGF production synergistically with TNF and IL6. Involved in transduction of inflammation downstream of pyroptosis: its mature form is specifically released in the extracellular milieu by passing through the gasdermin-D (GSDMD) pore. The protein is Interleukin-1 beta (IL1B) of Equus caballus (Horse).